Reading from the N-terminus, the 353-residue chain is Beta-agarase B (353 aa).

The signal sequence occupies residues Met-1–Gly-17. Cys-18 carries the N-palmitoyl cysteine lipid modification. The S-diacylglycerol cysteine moiety is linked to residue Cys-18. The tract at residues Leu-30 to Val-58 is disordered. The segment covering Val-32–Val-58 has biased composition (acidic residues). The GH16 domain occupies Val-58–Lys-353. Residues Tyr-105–Asn-107 and Asp-181 each bind substrate. The active-site Nucleophile is Glu-184. Residue Glu-189 is the Proton donor of the active site. The substrate site is built by His-215, Arg-219, Asp-224, Gln-226, and Glu-308.

The protein belongs to the glycosyl hydrolase 16 family. As to quaternary structure, homodimer.

Its subcellular location is the cell outer membrane. The catalysed reaction is Hydrolysis of (1-&gt;4)-beta-D-galactosidic linkages in agarose, giving the tetramer as the predominant product.. Cleaves the beta-1,4-linkages between beta-D-galactose and alpha-L-3,6-anhydro-galactose residues in agarose. Cleaves agarose in a random manner with retention of the anomeric-bond configuration, producing beta-anomers that give rise progressively to alpha-anomers when mutarotation takes place. Also tolerant to hybrid substrates containing C6-sulfate groups at the -4, +1, and +3 positions. The sequence is that of Beta-agarase B (agaB) from Zobellia galactanivorans (strain DSM 12802 / CCUG 47099 / CIP 106680 / NCIMB 13871 / Dsij).